The chain runs to 264 residues: MKQYLELMQKVLDEGTQKNDRTGTGTLSIFGHQMRFNLQDGFPLVTTKRCHLRSIIHELLWFLQGNTNIAYLHENNVTIWDEWADENGDLGPVYGKQWRAWPTPDGRHIDQITTVLNQLKNDPDSRRIIVSAWNVGELDKMALAPCHAFFQFYVADGKLSCQLYQRSCDVFLGLPFNIASYALLVHMMAQQCDLEVGDFVWTGGDTHLYSNHMDQTHLQLSREPRPLPKLIIKRKPESIFDYRFEDFEIEGYDPHPGIKAPVAI.

R21 provides a ligand contact to dUMP. (6R)-5,10-methylene-5,6,7,8-tetrahydrofolate is bound at residue H51. 126-127 (RR) is a binding site for dUMP. C146 functions as the Nucleophile in the catalytic mechanism. Residues 166 to 169 (RSCD), N177, and 207 to 209 (HLY) contribute to the dUMP site. D169 provides a ligand contact to (6R)-5,10-methylene-5,6,7,8-tetrahydrofolate. Residue A263 coordinates (6R)-5,10-methylene-5,6,7,8-tetrahydrofolate.

This sequence belongs to the thymidylate synthase family. Bacterial-type ThyA subfamily. As to quaternary structure, homodimer.

It localises to the cytoplasm. It carries out the reaction dUMP + (6R)-5,10-methylene-5,6,7,8-tetrahydrofolate = 7,8-dihydrofolate + dTMP. The protein operates within pyrimidine metabolism; dTTP biosynthesis. Its function is as follows. Catalyzes the reductive methylation of 2'-deoxyuridine-5'-monophosphate (dUMP) to 2'-deoxythymidine-5'-monophosphate (dTMP) while utilizing 5,10-methylenetetrahydrofolate (mTHF) as the methyl donor and reductant in the reaction, yielding dihydrofolate (DHF) as a by-product. This enzymatic reaction provides an intracellular de novo source of dTMP, an essential precursor for DNA biosynthesis. The protein is Thymidylate synthase of Escherichia coli O9:H4 (strain HS).